A 2643-amino-acid polypeptide reads, in one-letter code: BAH and coiled-coil domain-containing protein 1 (2643 aa).

2 disordered regions span residues 23–45 and 84–106; these read SAAAAARLAPAGPAAQPAAHFQP and SAASAHPSGPTSSPSEPAYRGSH. An N6-acetyllysine modification is found at Lys220. 2 stretches are compositionally biased toward basic and acidic residues: residues 224-249 and 683-702; these read KEKVSKGAEGRERPAVEEDSGKDRQK and ERPDCARSREHEAPHGDGEV. Disordered regions lie at residues 224-273, 674-704, 721-758, 985-1023, and 1038-1299; these read KEKV…SCEG, PATKGPGPVERPDCARSREHEAPHGDGEVRQ, GRPDTAYNTNSGRQGRAAPTFKGAGGPRASHALDLESE, RKPEDRHMELEEAAQEKTPKSTHKPVALTPMAKGTPSSA, and TLKT…KALP. The segment covering 985-1003 has biased composition (basic and acidic residues); the sequence is RKPEDRHMELEEAAQEKTP. A compositionally biased stretch (pro residues) spans 1133–1149; the sequence is RPEPPRTFLPGEPPPCS. A compositionally biased stretch (polar residues) spans 1210–1224; that stretch reads ATGQTNSTQGGMQNE. The segment covering 1269–1284 has biased composition (acidic residues); that stretch reads QEEETQLEESGGDSEV. Coiled-coil stretches lie at residues 1346–1373 and 1437–1486; these read ALLSELADLETQRQKSELSMQEDEDVLA and LKAA…SSRS. A compositionally biased stretch (basic and acidic residues) spans 1466 to 1484; sequence QRELARLQRRHDHEREESS. Disordered regions lie at residues 1466 to 1520, 1537 to 1559, 1604 to 1641, 1746 to 1781, 1875 to 1896, 2055 to 2124, 2322 to 2341, and 2349 to 2386; these read QREL…DSKK, GDEPPRKRSKLGKSPYTGLQSVS, KEAAPGGRIQKKLSRAKSVTASGAARHPHPDGDSGREM, RAPGRRPPGAPGKKKAKGKVKTGLRTEPGTATSRDT, FDEDDTSFSDEEEEEEEAGVQL, SSCR…HFLG, CPSSYSDEDEDGPGLATGVP, and SMSSSSSGSSTSSSSGSVSTSSLCSSDNEDSSYSSDDE. Positions 1487 to 1501 are enriched in basic residues; that stretch reads PARRGPGRPRKRKHS. The span at 1631–1641 shows a compositional bias: basic and acidic residues; the sequence is PHPDGDSGREM. A compositionally biased stretch (basic residues) spans 1757–1767; that stretch reads GKKKAKGKVKT. The segment covering 1875–1892 has biased composition (acidic residues); the sequence is FDEDDTSFSDEEEEEEEA. Over residues 2349 to 2374 the composition is skewed to low complexity; that stretch reads SMSSSSSGSSTSSSSGSVSTSSLCSS. Positions 2375-2386 are enriched in acidic residues; that stretch reads DNEDSSYSSDDE. Residues 2517–2637 enclose the BAH domain; that stretch reads ETLRIGDCAV…PTTGRLVTAD (121 aa).

This chain is BAH and coiled-coil domain-containing protein 1 (Bahcc1), found in Mus musculus (Mouse).